Reading from the N-terminus, the 118-residue chain is Acetylcholine receptor subunit beta (118 aa).

The signal sequence occupies residues 1–15 (APTVALLLLCALCSA).

The protein belongs to the ligand-gated ion channel (TC 1.A.9) family. Acetylcholine receptor (TC 1.A.9.1) subfamily. Beta-1/CHRNB1 sub-subfamily. Pentamer of two alpha chains, and one each of the beta, delta, and gamma chains.

It localises to the postsynaptic cell membrane. The protein localises to the cell membrane. The catalysed reaction is K(+)(in) = K(+)(out). The enzyme catalyses Na(+)(in) = Na(+)(out). Its function is as follows. After binding acetylcholine, the AChR responds by an extensive change in conformation that affects all subunits and leads to opening of an ion-conducting channel across the plasma membrane. The chain is Acetylcholine receptor subunit beta (CHRNB1) from Gallus gallus (Chicken).